Reading from the N-terminus, the 83-residue chain is Small ribosomal subunit protein eS21 (83 aa).

It belongs to the eukaryotic ribosomal protein eS21 family. As to quaternary structure, component of the 40S small ribosomal subunit. Interacts with sta.

It is found in the cytoplasm. Its subcellular location is the cytosol. The protein resides in the rough endoplasmic reticulum. In terms of biological role, may be an associated component of the ribosome rather than a core structural subunit. May act as a translation initiation factor. Has a role in regulation of cell proliferation in the hematopoietic organs and the imaginal disks of larva. The chain is Small ribosomal subunit protein eS21 (RpS21) from Drosophila ananassae (Fruit fly).